The sequence spans 347 residues: Phosphate acyltransferase (347 aa).

The protein belongs to the PlsX family. Homodimer. Probably interacts with PlsY.

It localises to the cytoplasm. It catalyses the reaction a fatty acyl-[ACP] + phosphate = an acyl phosphate + holo-[ACP]. It functions in the pathway lipid metabolism; phospholipid metabolism. Its function is as follows. Catalyzes the reversible formation of acyl-phosphate (acyl-PO(4)) from acyl-[acyl-carrier-protein] (acyl-ACP). This enzyme utilizes acyl-ACP as fatty acyl donor, but not acyl-CoA. In Methylobacillus flagellatus (strain ATCC 51484 / DSM 6875 / VKM B-1610 / KT), this protein is Phosphate acyltransferase.